The primary structure comprises 837 residues: WW domain-containing protein tag-325 (837 aa).

Positions Met-1–Thr-11 are enriched in polar residues. The segment at Met-1–Pro-66 is disordered. The segment covering Ser-33–Ser-43 has biased composition (low complexity). Residues Gln-44 to Asn-61 are compositionally biased toward polar residues. A WW domain is found at Arg-96–Phe-129. The span at Thr-150–Ser-161 shows a compositional bias: low complexity. Disordered stretches follow at residues Thr-150–Gln-181, Asp-194–Ser-257, Thr-338–Glu-403, Met-548–Pro-574, and Lys-778–Gln-800. Basic and acidic residues predominate over residues Glu-162–Gln-181. The span at Pro-247–Ser-257 shows a compositional bias: polar residues. Positions Arg-371–Glu-403 are enriched in basic and acidic residues. The PH domain occupies Arg-386–Ala-505. Positions Ser-556 to Thr-569 are enriched in polar residues. The Rho-GAP domain occupies Ser-610–Asp-827. Over residues Lys-778 to Pro-788 the composition is skewed to basic residues.

This is WW domain-containing protein tag-325 (tag-325) from Caenorhabditis elegans.